The sequence spans 693 residues: UvrABC system protein B (693 aa).

The Helicase ATP-binding domain occupies 35–188; sequence ERINNGEKDV…DQLLRQFVGI (154 aa). 48-55 contributes to the ATP binding site; it reads GATGTGKS. Positions 101–124 match the Beta-hairpin motif; that stretch reads YYDYYQPEAYVPQTDTFIEKDSSV. Positions 438–600 constitute a Helicase C-terminal domain; it reads QIDDLLGEIR…VDPTPLRKRI (163 aa). The interval 612-634 is disordered; that stretch reads ADTKSLLESAGKGRSRGKAPVPV. Residues 648–683 form the UVR domain; sequence VDLIEQLTAQMHSAAGELQFELAARLRDEVGDLKKE.

This sequence belongs to the UvrB family. In terms of assembly, forms a heterotetramer with UvrA during the search for lesions. Interacts with UvrC in an incision complex.

It is found in the cytoplasm. The UvrABC repair system catalyzes the recognition and processing of DNA lesions. A damage recognition complex composed of 2 UvrA and 2 UvrB subunits scans DNA for abnormalities. Upon binding of the UvrA(2)B(2) complex to a putative damaged site, the DNA wraps around one UvrB monomer. DNA wrap is dependent on ATP binding by UvrB and probably causes local melting of the DNA helix, facilitating insertion of UvrB beta-hairpin between the DNA strands. Then UvrB probes one DNA strand for the presence of a lesion. If a lesion is found the UvrA subunits dissociate and the UvrB-DNA preincision complex is formed. This complex is subsequently bound by UvrC and the second UvrB is released. If no lesion is found, the DNA wraps around the other UvrB subunit that will check the other stand for damage. This Renibacterium salmoninarum (strain ATCC 33209 / DSM 20767 / JCM 11484 / NBRC 15589 / NCIMB 2235) protein is UvrABC system protein B.